A 563-amino-acid chain; its full sequence is Inclusion body clearance protein IML2 (563 aa).

It belongs to the IML2 family. As to quaternary structure, interacts with lipid droplet proteins.

It is found in the cytoplasm. The protein resides in the nucleus. Its function is as follows. Inclusion body (IB) resident protein that interacts strongly with lipid droplet (LD) proteins. Involved in LD-mediated IB clearing after protein folding stress, probably by enabling access to the IBs of an LD-stored soluble sterol derivative that acts as a chaperone in inclusion clearing. This Schizosaccharomyces pombe (strain 972 / ATCC 24843) (Fission yeast) protein is Inclusion body clearance protein IML2.